We begin with the raw amino-acid sequence, 275 residues long: Large ribosomal subunit protein uL2 (275 aa).

Disordered regions lie at residues 1 to 55 (MGIR…RHRG) and 218 to 275 (PHVR…RRRR). Over residues 259–275 (TRNKKKASSRLIVRRRR) the composition is skewed to basic residues.

This sequence belongs to the universal ribosomal protein uL2 family. Part of the 50S ribosomal subunit. Forms a bridge to the 30S subunit in the 70S ribosome.

One of the primary rRNA binding proteins. Required for association of the 30S and 50S subunits to form the 70S ribosome, for tRNA binding and peptide bond formation. It has been suggested to have peptidyltransferase activity; this is somewhat controversial. Makes several contacts with the 16S rRNA in the 70S ribosome. The protein is Large ribosomal subunit protein uL2 of Crocosphaera subtropica (strain ATCC 51142 / BH68) (Cyanothece sp. (strain ATCC 51142)).